The following is a 415-amino-acid chain: Ubp4-interactor sfp47 (415 aa).

2 positions are modified to phosphoserine: S221 and S226. At T231 the chain carries Phosphothreonine. S235 carries the phosphoserine modification. Residues 352–415 (PIFAYVRALY…PSNYIEELEY (64 aa)) enclose the SH3 domain.

In terms of assembly, interacts with ubp4.

It localises to the cytoplasm. The protein localises to the endosome. Its function is as follows. Required for the regulation of activity and recruitment of ubp4 to endosomes. This Schizosaccharomyces pombe (strain 972 / ATCC 24843) (Fission yeast) protein is Ubp4-interactor sfp47 (sfp47).